Reading from the N-terminus, the 94-residue chain is Putative pterin-4-alpha-carbinolamine dehydratase (94 aa).

It belongs to the pterin-4-alpha-carbinolamine dehydratase family.

It catalyses the reaction (4aS,6R)-4a-hydroxy-L-erythro-5,6,7,8-tetrahydrobiopterin = (6R)-L-erythro-6,7-dihydrobiopterin + H2O. This chain is Putative pterin-4-alpha-carbinolamine dehydratase, found in Chloroflexus aggregans (strain MD-66 / DSM 9485).